The primary structure comprises 78 residues: Large ribosomal subunit protein eL20 (78 aa).

The protein belongs to the eukaryotic ribosomal protein eL20 family. As to quaternary structure, part of the 50S ribosomal subunit. Binds 23S rRNA.

The protein is Large ribosomal subunit protein eL20 of Pyrobaculum calidifontis (strain DSM 21063 / JCM 11548 / VA1).